Reading from the N-terminus, the 59-residue chain is Large ribosomal subunit protein uL30 (59 aa).

This sequence belongs to the universal ribosomal protein uL30 family. As to quaternary structure, part of the 50S ribosomal subunit.

This is Large ribosomal subunit protein uL30 from Leptospira interrogans serogroup Icterohaemorrhagiae serovar copenhageni (strain Fiocruz L1-130).